The sequence spans 223 residues: AMSH-like ubiquitin thioesterase 2 (223 aa).

Residues Val-49 to Gly-177 enclose the MPN domain. The Zn(2+) site is built by His-127, His-129, Asp-140, His-142, Cys-185, His-191, and His-193. Residues His-127 to Asp-140 carry the JAMM motif motif.

It belongs to the peptidase M67C family. The cofactor is Zn(2+).

In terms of biological role, zinc metalloprotease that cleaves 'Lys-48'- and 'Lys-63'-linked polyubiquitin chains. The protein is AMSH-like ubiquitin thioesterase 2 (AMSH2) of Arabidopsis thaliana (Mouse-ear cress).